Consider the following 480-residue polypeptide: Citrate synthase 1, peroxisomal (480 aa).

Active-site residues include His-321, His-360, and Asp-416.

Belongs to the citrate synthase family. In terms of tissue distribution, expressed only in siliques. Not expressed in flower, stem, cauline leaf, young leaf, mature leaf and senescent leaf.

Its subcellular location is the peroxisome. The catalysed reaction is oxaloacetate + acetyl-CoA + H2O = citrate + CoA + H(+). It functions in the pathway carbohydrate metabolism; tricarboxylic acid cycle; isocitrate from oxaloacetate: step 1/2. In Arabidopsis thaliana (Mouse-ear cress), this protein is Citrate synthase 1, peroxisomal (CSY1).